The chain runs to 306 residues: Curved DNA-binding protein (306 aa).

The region spanning 5 to 69 (DYYAIMGVKP…QRRAEYDQLW (65 aa)) is the J domain.

Its subcellular location is the cytoplasm. The protein resides in the nucleoid. DNA-binding protein that preferentially recognizes a curved DNA sequence. It is probably a functional analog of DnaJ; displays overlapping activities with DnaJ, but functions under different conditions, probably acting as a molecular chaperone in an adaptive response to environmental stresses other than heat shock. Lacks autonomous chaperone activity; binds native substrates and targets them for recognition by DnaK. Its activity is inhibited by the binding of CbpM. This chain is Curved DNA-binding protein, found in Salmonella arizonae (strain ATCC BAA-731 / CDC346-86 / RSK2980).